The primary structure comprises 274 residues: MRKIAIYGKGGIGKSTTTQNTVAGLSEMGKKIMVVGCDPKADSTRLLLGGLAQRTVLDTLREEGEDVELDDVRKVGYAGTLCTESGGPEPGVGCAGRGIITSINLLEQLGAYADSEELDYAFYDVLGDVVCGGFAMPIREGKAQEIYIVVSGEMMAMYAANNISKGIVKFAEAGGVRLGGLICNSRNVDNEREMIEAFAAKLGTQMIHFVPRDNMVQRAEINRKTVIEFDPAHSQADEYRTLARKIDANEMRVIPSPLEIEELEKLLIDYGIAA.

8–15 is an ATP binding site; it reads GKGGIGKS. Cys-94 contributes to the [4Fe-4S] cluster binding site. Arg-97 carries the ADP-ribosylarginine; by dinitrogenase reductase ADP-ribosyltransferase modification. Cys-131 contacts [4Fe-4S] cluster.

The protein belongs to the NifH/BchL/ChlL family. In terms of assembly, homodimer. It depends on [4Fe-4S] cluster as a cofactor. Post-translationally, the reversible ADP-ribosylation of Arg-97 inactivates the nitrogenase reductase and regulates nitrogenase activity.

It carries out the reaction N2 + 8 reduced [2Fe-2S]-[ferredoxin] + 16 ATP + 16 H2O = H2 + 8 oxidized [2Fe-2S]-[ferredoxin] + 2 NH4(+) + 16 ADP + 16 phosphate + 6 H(+). In terms of biological role, the key enzymatic reactions in nitrogen fixation are catalyzed by the nitrogenase complex, which has 2 components: the iron protein and the molybdenum-iron protein. This Desulfatibacillum aliphaticivorans protein is Nitrogenase iron protein.